A 188-amino-acid polypeptide reads, in one-letter code: MASDLTPHAGMAGRATVPGYDPKKHDPFFDGVSDALADKGFVVAAADDLVTWARTGSLMWMTFGLACCAVEMMQASMPRYDVERFGFAPRASPRQSDVMIVAGTLTNKMAPALRKVYDQMPEPRYVISMGSCANGGGYYHYSYSVVRGCDRIVPVDIYVPGCPPTAEALVYGILQLQKKIRREGSIER.

[4Fe-4S] cluster contacts are provided by cysteine 67, cysteine 68, cysteine 132, and cysteine 162.

It belongs to the complex I 20 kDa subunit family. NDH-1 is composed of 14 different subunits. Subunits NuoB, C, D, E, F, and G constitute the peripheral sector of the complex. [4Fe-4S] cluster serves as cofactor.

The protein resides in the cell inner membrane. The catalysed reaction is a quinone + NADH + 5 H(+)(in) = a quinol + NAD(+) + 4 H(+)(out). In terms of biological role, NDH-1 shuttles electrons from NADH, via FMN and iron-sulfur (Fe-S) centers, to quinones in the respiratory chain. Couples the redox reaction to proton translocation (for every two electrons transferred, four hydrogen ions are translocated across the cytoplasmic membrane), and thus conserves the redox energy in a proton gradient. The chain is NADH-quinone oxidoreductase subunit B from Maricaulis maris (strain MCS10) (Caulobacter maris).